Consider the following 424-residue polypeptide: Serine--tRNA ligase (424 aa).

L-serine is bound at residue 230-232 (TAE). Residue 261 to 263 (RSE) coordinates ATP. Glutamate 284 contributes to the L-serine binding site. Position 348–351 (348–351 (EISS)) interacts with ATP. Serine 384 is an L-serine binding site.

Belongs to the class-II aminoacyl-tRNA synthetase family. Type-1 seryl-tRNA synthetase subfamily. Homodimer. The tRNA molecule binds across the dimer.

It is found in the cytoplasm. The enzyme catalyses tRNA(Ser) + L-serine + ATP = L-seryl-tRNA(Ser) + AMP + diphosphate + H(+). It carries out the reaction tRNA(Sec) + L-serine + ATP = L-seryl-tRNA(Sec) + AMP + diphosphate + H(+). It functions in the pathway aminoacyl-tRNA biosynthesis; selenocysteinyl-tRNA(Sec) biosynthesis; L-seryl-tRNA(Sec) from L-serine and tRNA(Sec): step 1/1. Its function is as follows. Catalyzes the attachment of serine to tRNA(Ser). Is also able to aminoacylate tRNA(Sec) with serine, to form the misacylated tRNA L-seryl-tRNA(Sec), which will be further converted into selenocysteinyl-tRNA(Sec). This is Serine--tRNA ligase from Desulfatibacillum aliphaticivorans.